Reading from the N-terminus, the 198-residue chain is Protein GrpE (198 aa).

This sequence belongs to the GrpE family. In terms of assembly, homodimer.

The protein localises to the cytoplasm. Functionally, participates actively in the response to hyperosmotic and heat shock by preventing the aggregation of stress-denatured proteins, in association with DnaK and GrpE. It is the nucleotide exchange factor for DnaK and may function as a thermosensor. Unfolded proteins bind initially to DnaJ; upon interaction with the DnaJ-bound protein, DnaK hydrolyzes its bound ATP, resulting in the formation of a stable complex. GrpE releases ADP from DnaK; ATP binding to DnaK triggers the release of the substrate protein, thus completing the reaction cycle. Several rounds of ATP-dependent interactions between DnaJ, DnaK and GrpE are required for fully efficient folding. This chain is Protein GrpE, found in Vibrio harveyi (Beneckea harveyi).